A 394-amino-acid polypeptide reads, in one-letter code: MATAQLQRTSMSALVFPNKISTEQQSLVLVKRLLAVSVSCITYLRGIFPECAYGTRYLDDLCVKILREDKNCPGSTQLVKWMLGCYDALQKKYLRMVVLAVYTNPEDPQTISECYQFKFKYTSNGPIMDFISKNQSSESSMSSADTKKASILLIRKIYILMQNLGPLPNDVCLTMKLFYYDEVTPPDYQPPGFKDGDCEGVIFEGEPMYLNVGEVPTPFHTFKVKVTTEKERMENIYSGILSPKQIKTPLQKILMDKDDLEDEQEHYINDDFDIETKMEEQKKKLGSSELGEPNLVCEEDEIMRSKESPELSISHSQVEQLVSKTSELDVSESKTRSGKIFQNKMANGNQQIKSKESRKRSQLESGKTVLHHFDSSSQDSVPKRRKFSEPKEHI.

Residues 24 to 226 (QQSLVLVKRL…TPFHTFKVKV (203 aa)) form the HORMA domain. Residues 306-394 (KESPELSISH…RKFSEPKEHI (89 aa)) are disordered. Positions 311-325 (LSISHSQVEQLVSKT) are enriched in polar residues. Basic and acidic residues predominate over residues 353-362 (KSKESRKRSQ). Serine 376 is modified (phosphoserine). Positions 383-386 (KRRK) match the Nuclear localization signal motif.

In terms of assembly, interacts with HORMAD2. Interacts with IHO1. In terms of processing, phosphorylated at Ser-377 in a SPO11-dependent manner.

The protein resides in the nucleus. The protein localises to the chromosome. Plays a key role in meiotic progression. Regulates 3 different functions during meiosis: ensures that sufficient numbers of processed DNA double-strand breaks (DSBs) are available for successful homology search by increasing the steady-state numbers of single-stranded DSB ends. Promotes synaptonemal-complex formation independently of its role in homology search. Plays a key role in the male mid-pachytene checkpoint and the female meiotic prophase checkpoint: required for efficient build-up of ATR activity on unsynapsed chromosome regions, a process believed to form the basis of meiotic silencing of unsynapsed chromatin (MSUC) and meiotic prophase quality control in both sexes. This is HORMA domain-containing protein 1 (HORMAD1) from Sus scrofa (Pig).